An 842-amino-acid polypeptide reads, in one-letter code: Protein translocase subunit SecA (842 aa).

Residues Gln-91, 109–113, and Asp-498 each bind ATP; that span reads GEGKT. A compositionally biased stretch (basic and acidic residues) spans 798-824; sequence QGQHVSAEDGKEKVKPQPVVKDNHIGR. The tract at residues 798-827 is disordered; sequence QGQHVSAEDGKEKVKPQPVVKDNHIGRNDP. Zn(2+) is bound by residues Cys-828, Cys-830, Cys-839, and Cys-840.

This sequence belongs to the SecA family. Monomer and homodimer. Part of the essential Sec protein translocation apparatus which comprises SecA, SecYEG and auxiliary proteins SecDF. Other proteins may also be involved. Requires Zn(2+) as cofactor.

The protein resides in the cell membrane. The protein localises to the cytoplasm. It catalyses the reaction ATP + H2O + cellular proteinSide 1 = ADP + phosphate + cellular proteinSide 2.. Part of the Sec protein translocase complex. Interacts with the SecYEG preprotein conducting channel. Has a central role in coupling the hydrolysis of ATP to the transfer of proteins into and across the cell membrane, serving as an ATP-driven molecular motor driving the stepwise translocation of polypeptide chains across the membrane. The sequence is that of Protein translocase subunit SecA from Staphylococcus carnosus (strain TM300).